Reading from the N-terminus, the 154-residue chain is Ribonuclease H (154 aa).

Residues 5–146 (EQNIVYLYCD…ADELANRGID (142 aa)) form the RNase H type-1 domain. Residues D14, E52, D74, and D138 each contribute to the Mg(2+) site.

This sequence belongs to the RNase H family. As to quaternary structure, monomer. The cofactor is Mg(2+).

The protein localises to the cytoplasm. It catalyses the reaction Endonucleolytic cleavage to 5'-phosphomonoester.. In terms of biological role, endonuclease that specifically degrades the RNA of RNA-DNA hybrids. This is Ribonuclease H from Coxiella burnetii (strain CbuG_Q212) (Coxiella burnetii (strain Q212)).